Consider the following 199-residue polypeptide: Holliday junction branch migration complex subunit RuvA (199 aa).

A domain I region spans residues 1 to 62 (MIAYIKGLLA…EDGIQFFGFA (62 aa)). The interval 63-141 (KEDEKECFLL…GMAAVEHSTL (79 aa)) is domain II. Residues 142-152 (QQSVITTGSGD) are flexible linker. The tract at residues 152 to 199 (DEAVEALLALGYSQGEARDAVKKAQKSAPEEDLSALIKIALKELAPSR) is domain III.

This sequence belongs to the RuvA family. As to quaternary structure, homotetramer. Forms an RuvA(8)-RuvB(12)-Holliday junction (HJ) complex. HJ DNA is sandwiched between 2 RuvA tetramers; dsDNA enters through RuvA and exits via RuvB. An RuvB hexamer assembles on each DNA strand where it exits the tetramer. Each RuvB hexamer is contacted by two RuvA subunits (via domain III) on 2 adjacent RuvB subunits; this complex drives branch migration. In the full resolvosome a probable DNA-RuvA(4)-RuvB(12)-RuvC(2) complex forms which resolves the HJ.

The protein localises to the cytoplasm. In terms of biological role, the RuvA-RuvB-RuvC complex processes Holliday junction (HJ) DNA during genetic recombination and DNA repair, while the RuvA-RuvB complex plays an important role in the rescue of blocked DNA replication forks via replication fork reversal (RFR). RuvA specifically binds to HJ cruciform DNA, conferring on it an open structure. The RuvB hexamer acts as an ATP-dependent pump, pulling dsDNA into and through the RuvAB complex. HJ branch migration allows RuvC to scan DNA until it finds its consensus sequence, where it cleaves and resolves the cruciform DNA. The sequence is that of Holliday junction branch migration complex subunit RuvA from Desulforamulus reducens (strain ATCC BAA-1160 / DSM 100696 / MI-1) (Desulfotomaculum reducens).